A 136-amino-acid polypeptide reads, in one-letter code: Large ribosomal subunit protein uL16c (136 aa).

This sequence belongs to the universal ribosomal protein uL16 family. Part of the 50S ribosomal subunit.

It localises to the plastid. Its subcellular location is the chloroplast. This is Large ribosomal subunit protein uL16c from Oryza nivara (Indian wild rice).